We begin with the raw amino-acid sequence, 101 residues long: Urease subunit beta (101 aa).

It belongs to the urease beta subunit family. As to quaternary structure, heterotrimer of UreA (gamma), UreB (beta) and UreC (alpha) subunits. Three heterotrimers associate to form the active enzyme.

It localises to the cytoplasm. The enzyme catalyses urea + 2 H2O + H(+) = hydrogencarbonate + 2 NH4(+). Its pathway is nitrogen metabolism; urea degradation; CO(2) and NH(3) from urea (urease route): step 1/1. The sequence is that of Urease subunit beta from Pseudomonas fluorescens (strain SBW25).